The primary structure comprises 194 residues: MRIVVGMSGASGAIYGIRILEALQRIGVETDLVMSDSAKRTIAYETDYSISDLKGLATCVHDINDVGASIASGSFRHAGMIIAPCSIKTLSAVANSFNTNLLIRAADVALKERRKLVLMLRETPLHLGHLRLMTQATENGAVLLPPLPAFYHRPKTLDDIINQSVTKVLDQFDLDVDLFGRWTGNEERELAKSR.

FMN-binding positions include 9-11 (GAS), S35, 86-89 (SIKT), and R121. Dimethylallyl phosphate is bound by residues Y151 and K167.

Belongs to the UbiX/PAD1 family.

It carries out the reaction dimethylallyl phosphate + FMNH2 = prenylated FMNH2 + phosphate. Involved in the carboxylation of phenylphosphate. Its function is as follows. Flavin prenyltransferase that catalyzes the synthesis of the prenylated FMN cofactor (prenyl-FMN) for 4-hydroxy-3-polyprenylbenzoic acid decarboxylase UbiD. The prenyltransferase is metal-independent and links a dimethylallyl moiety from dimethylallyl monophosphate (DMAP) to the flavin N5 and C6 atoms of FMN. In Thauera aromatica, this protein is Flavin prenyltransferase UbiX.